Reading from the N-terminus, the 598-residue chain is Proline--tRNA ligase (598 aa).

It belongs to the class-II aminoacyl-tRNA synthetase family. ProS type 1 subfamily. As to quaternary structure, homodimer.

It localises to the cytoplasm. It carries out the reaction tRNA(Pro) + L-proline + ATP = L-prolyl-tRNA(Pro) + AMP + diphosphate. Functionally, catalyzes the attachment of proline to tRNA(Pro) in a two-step reaction: proline is first activated by ATP to form Pro-AMP and then transferred to the acceptor end of tRNA(Pro). As ProRS can inadvertently accommodate and process non-cognate amino acids such as alanine and cysteine, to avoid such errors it has two additional distinct editing activities against alanine. One activity is designated as 'pretransfer' editing and involves the tRNA(Pro)-independent hydrolysis of activated Ala-AMP. The other activity is designated 'posttransfer' editing and involves deacylation of mischarged Ala-tRNA(Pro). The misacylated Cys-tRNA(Pro) is not edited by ProRS. The protein is Proline--tRNA ligase of Rippkaea orientalis (strain PCC 8801 / RF-1) (Cyanothece sp. (strain PCC 8801)).